Consider the following 587-residue polypeptide: Transport inhibitor response 1-like protein Os05g0150500 (587 aa).

The 58-residue stretch at 6 to 63 (SRAACAAAAPPWHSLPDEVWEHAFSFLPAAADRGAAAGACSSWLRAERRSRRRLAVAN) folds into the F-box domain. Lysine 85 provides a ligand contact to 1D-myo-inositol hexakisphosphate. The segment at 92–93 (DF) is interaction with auxin-responsive proteins. Residues 124–125 (KR) and arginine 355 contribute to the 1D-myo-inositol hexakisphosphate site. The segment at 358–363 (PSDPFG) is interaction with auxin-responsive proteins. 409-411 (CFR) contacts 1D-myo-inositol hexakisphosphate. Residues 413–417 (CILEP) are interaction with auxin-responsive proteins. Residue arginine 444 coordinates 1D-myo-inositol hexakisphosphate. Residues 472 to 473 (AF) are interaction with auxin-responsive proteins. Residues 492 to 493 (KK) and arginine 517 each bind 1D-myo-inositol hexakisphosphate.

In terms of assembly, part of a SCF (SKP1-cullin-F-box) protein ligase complex. May interact with auxin and auxin-responsive proteins.

It is found in the nucleus. The protein operates within protein modification; protein ubiquitination. The sequence is that of Transport inhibitor response 1-like protein Os05g0150500 from Oryza sativa subsp. japonica (Rice).